A 65-amino-acid polypeptide reads, in one-letter code: Muscarinic toxin 3 (65 aa).

4 cysteine pairs are disulfide-bonded: cysteine 3/cysteine 24, cysteine 17/cysteine 42, cysteine 46/cysteine 57, and cysteine 58/cysteine 63.

This sequence belongs to the three-finger toxin family. Short-chain subfamily. Aminergic toxin sub-subfamily. As to expression, expressed by the venom gland.

Its subcellular location is the secreted. Functionally, potent antagonist (IC(50)=1-10 nM) of M4 (CHRM4) muscarinic receptors, and CHRM1, ADRA1A, ADRA2A and ADRA2C adrenergic receptors. Also antagonises ADRA1B and ADRA1D adrenergic receptors with a 10-times lower affinity. The sequence is that of Muscarinic toxin 3 from Dendroaspis angusticeps (Eastern green mamba).